Reading from the N-terminus, the 133-residue chain is Large ribosomal subunit protein bL17 (133 aa).

Belongs to the bacterial ribosomal protein bL17 family. Part of the 50S ribosomal subunit. Contacts protein L32.

The protein is Large ribosomal subunit protein bL17 of Ehrlichia chaffeensis (strain ATCC CRL-10679 / Arkansas).